We begin with the raw amino-acid sequence, 300 residues long: Type II methyltransferase M.XycI (300 aa).

The disordered stretch occupies residues arginine 109 to threonine 129. Residues arginine 112–proline 127 show a composition bias toward basic and acidic residues.

The protein belongs to the N(4)/N(6)-methyltransferase family. N(4) subfamily.

It carries out the reaction a 2'-deoxycytidine in DNA + S-adenosyl-L-methionine = an N(4)-methyl-2'-deoxycytidine in DNA + S-adenosyl-L-homocysteine + H(+). In terms of biological role, a beta subtype methylase, recognizes the double-stranded sequence 5'-CCCGGG-3', methylates C-2 on both strands, and protects the DNA from cleavage by the XcyI endonuclease. In Xanthomonas campestris pv. cyanopsidis, this protein is Type II methyltransferase M.XycI (xcyIM).